A 395-amino-acid polypeptide reads, in one-letter code: Innexin inx3 (395 aa).

Topologically, residues 1–37 are cytoplasmic; the sequence is MAVFGMVSAVSGFIKIRYLLDKAVIDNMVFRCHYRIT. A helical transmembrane segment spans residues 38 to 58; sequence TAILFTCCIIVTANNLIGDPI. Topologically, residues 59 to 114 are extracellular; the sequence is SCINDGAIPMHVINTFCWITYTYTIPGQQHRQIGTDVAGPGLGNEYGQEKRYHSYY. Residues 115–135 form a helical membrane-spanning segment; that stretch reads QWVPFVLFFQGLMFYVPHWVW. Residues 136–183 are Cytoplasmic-facing; that stretch reads KNMEDGKIRMITDGLRGMVSVPDDYRRDRQDRILKYFVNSLNTHNGYS. A helical transmembrane segment spans residues 184–204; sequence FAYFFCELLNFINVIVNIFMV. Topologically, residues 205–272 are extracellular; the sequence is DKFLGGAFMS…VLALNILNEK (68 aa). A helical membrane pass occupies residues 273 to 293; sequence IYIFLWFWFIILATISGVAVL. The Cytoplasmic portion of the chain corresponds to 294-395; sequence YSLVVIMMPT…TFGGGKETET (102 aa). 2 positions are modified to phosphoserine: Ser-366 and Ser-377. Phosphotyrosine is present on Tyr-381.

This sequence belongs to the pannexin family. As to quaternary structure, heterooligomer of Inx2 (via cytoplasmic C-terminal region) and Inx3 (via cytoplasmic C-terminal region). In ovary, expressed in nurse cells and follicle cells. Expressed in embryonic epithelial cells. Ubiquitously expressed in stage 5 embryos. Expressed in foregut and hindgut from stage 11-17 and in proventriculus, epidermis and CNS in stage 16 embryos (at protein level). Expressed in anterior and ventral regions in stage 8 embryos. Repeating epidermal pattern emerges at stage 11, refines to one or two cells at each side of the segment borders by stage 13. Expressed in the imaginal wing disk. In pupae, expressed in the CNS and in secondary and tertiary pigment cells of the retina.

Its subcellular location is the cell membrane. The protein resides in the cell junction. The protein localises to the gap junction. It is found in the cytoplasm. It localises to the lateral cell membrane. Its subcellular location is the apicolateral cell membrane. Its function is as follows. Structural components of the gap junctions. Essential for proper epithelial development of the epidermis. The chain is Innexin inx3 (Inx3) from Drosophila melanogaster (Fruit fly).